The following is a 2081-amino-acid chain: MAGSLKLYVFGDEAGDFAGPLQKLCEQRKEVLFLHFLDELNKVLRDEVRRQPRDVRVQIPEFTDVLDLVRHYRDSGSRNQILETTLTLAFRIGVKVHGAAQRLSKHGDAAVAQSWTTLIIGAQKEASIAALAEFNESKGIPHANQAYISANSKDVVSISGPPETVTSLLQHSEYLQKFRTISLDIFAPFHAPHLYNDDDVAEVLQPFSGKNEKRKLFIPVISGLGTLYSPDMDVETLMADVVRDILIRPLLFENVMKTVTETTTASSHQNCQIFSVGPSQAINSLASTLRADTSLNVTTEGPIHTGSPDYEPLNGAQKIAIVGMAGRFPNSDDLESFWSTLQQGLDLHRRVPPDRFDIDAHYDPTGKKLNSTHTPYGCFIEKPGLFDPRFFNMSQREAYQTDPMGRLALVTAYEALEMSGFVPNRTPSSMLDRIGTFYGQTSDDWRTLNAAEKIDMYYIPGTIRAFATGRINYHFKFKGPSYNVDTACSSSFAAIQLACTSLLAKECDTALAGGLNVMTTPDLFAGLSRAHFLSKTGSCKTFDDGADGFCRGDGVGTVVLKRLEDAEADNDPILAVVLGTATNHSSEAVSITRPHGPAQEALYRKILKHTGVDPVDVSYVEMHGTGTQAGDGTEMKSITNVFAPRDKGRRQPDQLIHLGALKANIGHGEASAGVASLIKTVIMMQKNAIPPHVGIKTTMNKTFPHDLNERGVRIAFKETPWVRPDGGKRRAYLNNFGASGGNTGLLLEDRPAPVSTRASDPRTSFVVSLSAKSAYSLDQNINRLATYLEGNPDTSLPALSYTTTARRVHYPHRVSYAVRSIPETIKSLRSAQSKAIKPDPASSGKIAFLFTGQGSHYTALGKQLFEDCQTFRNDLVEFNRIGQKQGFPTFLPLIDGSEDVASLSPVALQLGQSCIQIALARLWKSWGITPSSVLGHSLGEYAALNVAGVLSASDTIYLVGRRAQLLEELCTPGSHKMLAIAASVSSVKEILGDKDIEVACINGPNETVISGLAEQMESYSKTLKATDVKCSLLSTAYAFHSAQIQVIVEQYRKVASSVHFGPPNVPVISPLLGDVVTDGNVFGPDYLCRQAREAVNFMGALKAAESKGVVDNNVIWLEIGPAPVCSAFVKSSLGSKALTLPSLRKQEDVWKTLSGTLSNLYSKGLTIEWEEVHREYEASHTVLALPSYCFEEKNYWLDYHNNWCLTKGQKLVESAAPKRRGRHLLTPSVQKVIKEDFGQTKITVVAESDLSDPDLNHAVTGHLVNGSALCPAGVYAESALTLAGYIYHRVKKTEDIGMDVRALEIVKPLIAKGRDQKEKQVFRITATADQPLKLVKISYNSVSADGSLGVLHATCHVEYGDIKTWRAEWSRLAYLVRSRIDVMNDGVKGRQYQKLDRKAAYEGFSGFVEYDKQYHGMKEVIMDQKNLEATSILEFQPSNDYGEFEIDPRFIDNISHLSGFILNGSGATDTRKQVFVSHGWDHLQIAEPLSSSKSYSNYVKMHEIEKATMAGDVYIFDGEEMVALVGGVKFKAIPRAVINQLLPPVKGSKALEKSAPRQNPKATATKTTQKPQAPVPVPQKQNKAIIDDFLALLCEELGVELSELQDDTAFADIGLDSLMSLSITGRMREELDLEAIPSSVFTDYPTVGQVKELILKLAGSSSDENTTDTPDEEEDPATADADNTEMIRENPLESVSPNVSSSEAMDGFLAIVCEEVGVDLEELLEVQNFAGAGVDSLMSLTITGRAREDLDMDIPSSFFVDYPTVDQARLAIASLMGGGDQTGATTPYSGSDDAKSSTSSLTAGSVLTPDDDMDAQDISQLTRPATSIVLQGSLKTASKTLFLLPDGSGSATSYAALPRVSPDTCVVALNCPFMKTPSEYTTGIEGVAALYLSEIRRRQPEGPYVLGGWSAGGILAYAVACQLIEMGEEIEDLFLIDSPCPINLQPLPSELLHFIDSLGLLGAQGSAPKWLIPHFEASIKNLTAFVPHAMDPDEAPRTHIIWARDGLVSESDEKQFPRSDAEAKSVKFLLDGRQNLGTYGWEKLIGSENISVDFIEGNHFTMMREPKVNQLPSILDRLIGA.

The tract at residues 85–190 (TLTLAFRIGV…ISLDIFAPFH (106 aa)) is N-terminal acylcarrier protein transacylase (SAT) domain (SAT). The 434-residue stretch at 316–749 (AQKIAIVGMA…GGNTGLLLED (434 aa)) folds into the Ketosynthase family 3 (KS3) domain. Residues Cys488, His623, and His667 each act as for beta-ketoacyl synthase activity in the active site. A malonyl-CoA:ACP transacylase (MAT) domain region spans residues 849-1147 (LFTGQGSHYT…LTLPSLRKQE (299 aa)). The N-terminal hotdog fold stretch occupies residues 1230–1364 (QKVIKEDFGQ…CHVEYGDIKT (135 aa)). The 310-residue stretch at 1230-1539 (QKVIKEDFGQ…FKAIPRAVIN (310 aa)) folds into the PKS/mFAS DH domain. The product template (PT) domain stretch occupies residues 1259-1536 (VTGHLVNGSA…GVKFKAIPRA (278 aa)). Residue His1262 is the Proton acceptor; for dehydratase activity of the active site. Positions 1392–1539 (YQKLDRKAAY…FKAIPRAVIN (148 aa)) are C-terminal hotdog fold. The Proton donor; for dehydratase activity role is filled by Asp1452. Residues 1549–1578 (KALEKSAPRQNPKATATKTTQKPQAPVPVP) form a disordered region. Positions 1558–1572 (QNPKATATKTTQKPQ) are enriched in low complexity. The Carrier 1 domain maps to 1580–1658 (KQNKAIIDDF…QVKELILKLA (79 aa)). Ser1617 carries the O-(pantetheine 4'-phosphoryl)serine modification. A disordered region spans residues 1659-1700 (GSSSDENTTDTPDEEEDPATADADNTEMIRENPLESVSPNVS). Acidic residues predominate over residues 1665 to 1677 (NTTDTPDEEEDPA). The 78-residue stretch at 1699 to 1776 (VSSSEAMDGF…QARLAIASLM (78 aa)) folds into the Carrier 2 domain. Ser1736 is modified (O-(pantetheine 4'-phosphoryl)serine). Residues 1783-1809 (GATTPYSGSDDAKSSTSSLTAGSVLTP) are disordered. Residues 1840-2070 (TLFLLPDGSG…TMMREPKVNQ (231 aa)) are thioesterase (TE) domain.

It carries out the reaction 3 malonyl-CoA + acetyl-CoA + 2 H(+) = orsellinate + 3 CO2 + 4 CoA. It participates in secondary metabolite biosynthesis. Its function is as follows. Non-reducing polyketide synthase; part of the gene cluster that mediates the biosynthesis of terrein, a fungal metabolite with ecological, antimicrobial, antiproliferative, and antioxidative activities. The first step in the pathway is performed by the polyketide synthase terA that produces 4-hydroxy-6-methylpyranon (4-HMP), orsellinic acid (OA), and 2,3-dehydro-6-hydroxymellein (2,3-dehydro-6-HM) by condensing acetyl-CoA with two, three, or four malonyl-CoA units, respectively. 4-HMP and OA are not pathway intermediates, but are rather shunt or side products. 2,3-dehydro-6-HM is further converted to 6-hydroxymellein (6-HM) by the 6-hydroxymellein synthase terB. The monooxygenases terC and terD, the multicopper oxidase terE and the Kelch-like protein terF are then involved in the transformation of 6-HM to terrein. Even if they are co-regulated with the other terrein cluster genes, terH and terI seem to be dispensable for terrein production; whereas one or both of the 2 transporters terG and terJ are probably required for efficient secretion of metabolites. This is Non-reducing polyketide synthase terA from Aspergillus terreus (strain NIH 2624 / FGSC A1156).